Consider the following 412-residue polypeptide: Probable ribonuclease FAU-1 (412 aa).

This sequence belongs to the FAU-1 family.

Functionally, probable RNase involved in rRNA stability through maturation and/or degradation of precursor rRNAs. Binds to RNA in loop regions with AU-rich sequences. The protein is Probable ribonuclease FAU-1 of Sulfurisphaera tokodaii (strain DSM 16993 / JCM 10545 / NBRC 100140 / 7) (Sulfolobus tokodaii).